A 125-amino-acid chain; its full sequence is Ino eighty subunit 5 (125 aa).

Thr-124 is subject to Phosphothreonine.

In terms of assembly, component of the chromatin-remodeling INO80 complex, at least composed of ARP4, ARP5, ARP8, RVB1, RVB2, TAF14, NHP10, IES1, IES3, IES4, IES6, ACT1, IES2, IES5 and INO80.

It localises to the nucleus. The protein is Ino eighty subunit 5 (IES5) of Saccharomyces cerevisiae (strain ATCC 204508 / S288c) (Baker's yeast).